Here is a 111-residue protein sequence, read N- to C-terminus: Putative pterin-4-alpha-carbinolamine dehydratase (111 aa).

Belongs to the pterin-4-alpha-carbinolamine dehydratase family.

The catalysed reaction is (4aS,6R)-4a-hydroxy-L-erythro-5,6,7,8-tetrahydrobiopterin = (6R)-L-erythro-6,7-dihydrobiopterin + H2O. The polypeptide is Putative pterin-4-alpha-carbinolamine dehydratase (Marinobacter nauticus (strain ATCC 700491 / DSM 11845 / VT8) (Marinobacter aquaeolei)).